The chain runs to 444 residues: MPTWIPNNLCAQPTTRNAKPPSNGHPQATQQQSAPGSLAYRNSSNIPNGATNHVRQQKWQYTRSGHRKMADGEAVISTVNNVEEVHGQLFEVAPRYVNLSYIGEGAYGMVASALDTITRDRVAIKKISPFEHQTFCQRTLREIKILNRFKHENIINIQEIIRSETVDSLKDIYIVQCLMETDLYKLLKTQKLSNDHVCYFLYQILRGLKYIHSANVLHRDLKPSNLLLNTTCDLKICDFGLARVTDPQTDHTGFLTEYVATRWYRAPEIMLNSKGYTKSIDVWSVGCILAEMLSNRPLFPGKHYLDQLNLILAVVGSPSNADLQCIINDKARSYLISLPHKPKQPWARLYPGADPRALDLLDKMLTFNPHNRIDIEQALAHPYLEQYYDPGDEPVCEEPFTLEMEFDDLPKEKLKELIWEEAEAHHRRMEAEAAARNNGGQNPV.

Composition is skewed to polar residues over residues Met1–Asn17 and Gly24–Gln56. Positions Met1–Gln56 are disordered. Positions Tyr96 to Leu384 constitute a Protein kinase domain. ATP contacts are provided by residues Ile102–Val110 and Lys125. Asp220 (proton acceptor) is an active-site residue. Thr256 is modified (phosphothreonine). The short motif at Thr256 to Tyr258 is the TXY element. Residue Tyr258 is modified to Phosphotyrosine.

Belongs to the protein kinase superfamily. CMGC Ser/Thr protein kinase family. MAP kinase subfamily. Isoform a interacts with gck-1 (via N-terminus). Mg(2+) is required as a cofactor. Post-translationally, isoform a is phosphorylated at the pachytene stage during oogenesis and is negatively regulated by gck-1. Isoform b is phosphorylated in proximal oocytes. In terms of tissue distribution, expressed in cells lining the rectum. Isoform a is expressed in nervous system, body wall muscles and posterior intestine. Isoform b expression may be restricted to germline.

It catalyses the reaction L-seryl-[protein] + ATP = O-phospho-L-seryl-[protein] + ADP + H(+). It carries out the reaction L-threonyl-[protein] + ATP = O-phospho-L-threonyl-[protein] + ADP + H(+). Its activity is regulated as follows. Activated by dual phosphorylation at Thr-256 and Tyr-258. May be inactivated by lip-1-mediated dephosphorylation. Functions in let-60 Ras signaling pathway; acts downstream of lin-45 raf kinase, but before the lin-1 gene product in controlling vulval cell differentiation. Plays a negative role in proximal germline proliferation in the mitotic zone. Required for progression of developing oocytes through the pachytene stage, perhaps acting after efl-1/dpl-1-mediated gene activation and before gld-1 down-regulation. May play a role in global X chromosome reactivation or be indirectly required for progression of germ cells through meiosis to the point where X reactivation occurs. In oocytes, inhibits the activity of the chloride channel clh-3, likely by activating gck-3. Plays a role in response to M.nematophilum-mediated bacterial infection by promoting tail swelling and preventing constipation. Involved in fluid homeostasis. In addition, involved in the up-regulation of lysozyme ilys-3 expression in the intestine in responses to M.nematophilum-mediated bacterial infection. By phosphorylating transcription factor skn-1 (isoform c) may play a role in increasing life span downstream of lin-45, let-60 and mek-2. By up-regulating cep-1 and down-regulating gld-1 expression in the late pachytene stage, plays a role in germline apoptosis in response to DNA damage. Regulates egl-1 expression in response to DNA damage, probably upstream of cep-1. In terms of biological role, suppresses germline tumor formation by preventing the dedifferentiation of secondary spermatocytes probably upstream of rskn-1. The sequence is that of Mitogen-activated protein kinase mpk-1 (mpk-1) from Caenorhabditis elegans.